The sequence spans 345 residues: D-fructose 1,6-bisphosphatase class 2/sedoheptulose 1,7-bisphosphatase (345 aa).

The Mn(2+) site is built by D33, E57, D97, and E100. Substrate-binding positions include 100–102 (EGT), Y131, 176–178 (RPR), and 198–200 (DGD). E225 is a Mn(2+) binding site.

The protein belongs to the FBPase class 2 family. In terms of assembly, homotetramer. Mn(2+) serves as cofactor.

It catalyses the reaction beta-D-fructose 1,6-bisphosphate + H2O = beta-D-fructose 6-phosphate + phosphate. The catalysed reaction is D-sedoheptulose 1,7-bisphosphate + H2O = D-sedoheptulose 7-phosphate + phosphate. The protein operates within carbohydrate biosynthesis; Calvin cycle. Functionally, catalyzes the hydrolysis of fructose 1,6-bisphosphate (Fru 1,6-P2) and sedoheptulose 1,7-bisphosphate (Sed 1,7-P2) to fructose 6-phosphate and sedoheptulose 7-phosphate, respectively. The sequence is that of D-fructose 1,6-bisphosphatase class 2/sedoheptulose 1,7-bisphosphatase from Microcystis aeruginosa (strain NIES-843 / IAM M-2473).